Reading from the N-terminus, the 101-residue chain is NADH-quinone oxidoreductase subunit K (101 aa).

Helical transmembrane passes span 4 to 24 (LSHF…GIFL), 30 to 50 (IVLL…FIAF), and 61 to 81 (VFVF…LAIL).

The protein belongs to the complex I subunit 4L family. In terms of assembly, NDH-1 is composed of 14 different subunits. Subunits NuoA, H, J, K, L, M, N constitute the membrane sector of the complex.

It is found in the cell inner membrane. The catalysed reaction is a quinone + NADH + 5 H(+)(in) = a quinol + NAD(+) + 4 H(+)(out). Functionally, NDH-1 shuttles electrons from NADH, via FMN and iron-sulfur (Fe-S) centers, to quinones in the respiratory chain. The immediate electron acceptor for the enzyme in this species is believed to be ubiquinone. Couples the redox reaction to proton translocation (for every two electrons transferred, four hydrogen ions are translocated across the cytoplasmic membrane), and thus conserves the redox energy in a proton gradient. This is NADH-quinone oxidoreductase subunit K from Thiobacillus denitrificans (strain ATCC 25259 / T1).